Consider the following 1449-residue polypeptide: Gag-Pol polyprotein (1449 aa).

Glycine 2 is lipidated: N-myristoyl glycine; by host. The short motif at 16-22 is the Nuclear export signal element; that stretch reads LEKIRLR. The Nuclear localization signal motif lies at 26 to 32; the sequence is KKRYQLK. 2 consecutive CCHC-type zinc fingers follow at residues 392 to 409 and 413 to 430; these read IKCW…QCRA and QGCW…KCPE. Residues 442–494 are disordered; it reads GKEAPQFPHGPDASGADTNCSPRGSSCGSTEELHEDGQKAEGEQRETLQGGNG. The segment covering 457-470 has biased composition (polar residues); that stretch reads ADTNCSPRGSSCGS. The segment covering 472 to 487 has biased composition (basic and acidic residues); sequence EELHEDGQKAEGEQRE. In terms of domain architecture, Peptidase A2 spans 518–587; it reads VEVLLDTGAD…TPINIFGRNL (70 aa). Aspartate 523 acts as the For protease activity; shared with dimeric partner in catalysis. Residues 641-831 enclose the Reverse transcriptase domain; the sequence is DGQLEEAPPT…PPFQWMGYEL (191 aa). Positions 707, 782, and 783 each coordinate Mg(2+). An RT 'primer grip' region spans residues 824 to 832; that stretch reads FQWMGYELW. The Tryptophan repeat motif signature appears at 994–1010; it reads WEQWWTDYWQVTWIPEW. In terms of domain architecture, RNase H type-1 spans 1030 to 1153; the sequence is IQGAETFYVD…VDHLVSQGIR (124 aa). Aspartate 1039, glutamate 1074, aspartate 1094, and aspartate 1145 together coordinate Mg(2+). Residues 1159–1200 form an Integrase-type zinc finger; that stretch reads EKIEPAQEEHEKYHSNVKELVFKFGLPRLVAKQIVDTCDKCH. 4 residues coordinate Zn(2+): histidine 1168, histidine 1172, cysteine 1196, and cysteine 1199. Residues 1210–1360 enclose the Integrase catalytic domain; it reads VNAELGTWQM…TPAERLVNMI (151 aa). The Mg(2+) site is built by aspartate 1220 and aspartate 1272. Positions 1379 to 1426 form a DNA-binding region, integrase-type; sequence FRVYYREGRDQLWKGPGELLWKGEGAVILKVGTEIKVVPRRKAKIIKD.

As to quaternary structure, homotrimer. Interacts with gp41 (via C-terminus). In terms of assembly, homodimer. The active site consists of two apposed aspartic acid residues. Heterodimer of p66 RT and p51 RT (RT p66/p51). Heterodimerization of RT is essential for DNA polymerase activity. Despite the sequence identities, p66 RT and p51 RT have distinct folding. As to quaternary structure, homotetramer; may further associate as a homohexadecamer. Requires Mg(2+) as cofactor. Post-translationally, specific enzymatic cleavages by the viral protease yield mature proteins. The protease is released by autocatalytic cleavage. The polyprotein is cleaved during and after budding, this process is termed maturation. Proteolytic cleavage of p66 RT removes the RNase H domain to yield the p51 RT subunit. In terms of processing, capsid protein p24 is phosphorylated.

The protein resides in the virion. It localises to the host nucleus. Its subcellular location is the host cytoplasm. The protein localises to the host cell membrane. The enzyme catalyses Specific for a P1 residue that is hydrophobic, and P1' variable, but often Pro.. It carries out the reaction Endohydrolysis of RNA in RNA/DNA hybrids. Three different cleavage modes: 1. sequence-specific internal cleavage of RNA. Human immunodeficiency virus type 1 and Moloney murine leukemia virus enzymes prefer to cleave the RNA strand one nucleotide away from the RNA-DNA junction. 2. RNA 5'-end directed cleavage 13-19 nucleotides from the RNA end. 3. DNA 3'-end directed cleavage 15-20 nucleotides away from the primer terminus.. It catalyses the reaction 3'-end directed exonucleolytic cleavage of viral RNA-DNA hybrid.. The catalysed reaction is DNA(n) + a 2'-deoxyribonucleoside 5'-triphosphate = DNA(n+1) + diphosphate. Its activity is regulated as follows. The viral protease is inhibited by many synthetic protease inhibitors (PIs), such as amprenavir, atazanavir, indinavir, loprinavir, nelfinavir, ritonavir and saquinavir. RT can be inhibited either by nucleoside RT inhibitors (NRTIs) or by non nucleoside RT inhibitors (NNRTIs). NRTIs act as chain terminators, whereas NNRTIs inhibit DNA polymerization by binding a small hydrophobic pocket near the RT active site and inducing an allosteric change in this region. Classical NRTIs are abacavir, adefovir (PMEA), didanosine (ddI), lamivudine (3TC), stavudine (d4T), tenofovir (PMPA), zalcitabine (ddC), and zidovudine (AZT). Classical NNRTIs are atevirdine (BHAP U-87201E), delavirdine, efavirenz (DMP-266), emivirine (I-EBU), and nevirapine (BI-RG-587). The tritherapies used as a basic effective treatment of AIDS associate two NRTIs and one NNRTI. Use of protease inhibitors in tritherapy regimens permit more ambitious therapeutic strategies. Its function is as follows. Gag-Pol polyprotein and Gag polyprotein may regulate their own translation, by the binding genomic RNA in the 5'-UTR. At low concentration, Gag-Pol and Gag would promote translation, whereas at high concentration, the polyproteins encapsidate genomic RNA and then shut off translation. Matrix protein p17 has two main functions: in infected cell, it targets Gag and Gag-pol polyproteins to the plasma membrane via a multipartite membrane-binding signal, that includes its myristointegration complex. The myristoylation signal and the NLS exert conflicting influences its subcellular localization. The key regulation of these motifs might be phosphorylation of a portion of MA molecules on the C-terminal tyrosine at the time of virus maturation, by virion-associated cellular tyrosine kinase. Implicated in the release from host cell mediated by Vpu. Functionally, capsid protein p24 forms the conical core that encapsulates the genomic RNA-nucleocapsid complex in the virion. The core is constituted by capsid protein hexamer subunits. The core is disassembled soon after virion entry. Interaction with host PPIA/CYPA protects the virus from restriction by host TRIM5-alpha and from an unknown antiviral activity in host cells. This capsid restriction by TRIM5 is one of the factors which restricts SIV to the simian species. In terms of biological role, nucleocapsid protein p7 encapsulates and protects viral dimeric unspliced (genomic) RNA. Binds these RNAs through its zinc fingers. Facilitates rearangement of nucleic acid secondary structure during retrotranscription of genomic RNA. This capability is referred to as nucleic acid chaperone activity. Its function is as follows. The aspartyl protease mediates proteolytic cleavages of Gag and Gag-Pol polyproteins during or shortly after the release of the virion from the plasma membrane. Cleavages take place as an ordered, step-wise cascade to yield mature proteins. This process is called maturation. Displays maximal activity during the budding process just prior to particle release from the cell. Also cleaves Nef and Vif, probably concomitantly with viral structural proteins on maturation of virus particles. Hydrolyzes host EIF4GI and PABP1 in order to shut off the capped cellular mRNA translation. The resulting inhibition of cellular protein synthesis serves to ensure maximal viral gene expression and to evade host immune response. Reverse transcriptase/ribonuclease H (RT) is a multifunctional enzyme that converts the viral dimeric RNA genome into dsDNA in the cytoplasm, shortly after virus entry into the cell. This enzyme displays a DNA polymerase activity that can copy either DNA or RNA templates, and a ribonuclease H (RNase H) activity that cleaves the RNA strand of RNA-DNA heteroduplexes in a partially processive 3' to 5' endonucleasic mode. Conversion of viral genomic RNA into dsDNA requires many steps. A tRNA binds to the primer-binding site (PBS) situated at the 5'-end of the viral RNA. RT uses the 3' end of the tRNA primer to perform a short round of RNA-dependent minus-strand DNA synthesis. The reading proceeds through the U5 region and ends after the repeated (R) region which is present at both ends of viral RNA. The portion of the RNA-DNA heteroduplex is digested by the RNase H, resulting in a ssDNA product attached to the tRNA primer. This ssDNA/tRNA hybridizes with the identical R region situated at the 3' end of viral RNA. This template exchange, known as minus-strand DNA strong stop transfer, can be either intra- or intermolecular. RT uses the 3' end of this newly synthesized short ssDNA to perform the RNA-dependent minus-strand DNA synthesis of the whole template. RNase H digests the RNA template except for two polypurine tracts (PPTs) situated at the 5'-end and near the center of the genome. It is not clear if both polymerase and RNase H activities are simultaneous. RNase H can probably proceed both in a polymerase-dependent (RNA cut into small fragments by the same RT performing DNA synthesis) and a polymerase-independent mode (cleavage of remaining RNA fragments by free RTs). Secondly, RT performs DNA-directed plus-strand DNA synthesis using the PPTs that have not been removed by RNase H as primers. PPTs and tRNA primers are then removed by RNase H. The 3' and 5' ssDNA PBS regions hybridize to form a circular dsDNA intermediate. Strand displacement synthesis by RT to the PBS and PPT ends produces a blunt ended, linear dsDNA copy of the viral genome that includes long terminal repeats (LTRs) at both ends. Functionally, integrase catalyzes viral DNA integration into the host chromosome, by performing a series of DNA cutting and joining reactions. This enzyme activity takes place after virion entry into a cell and reverse transcription of the RNA genome in dsDNA. The first step in the integration process is 3' processing. This step requires a complex comprising the viral genome, matrix protein, Vpr and integrase. This complex is called the pre-integration complex (PIC). The integrase protein removes 2 nucleotides from each 3' end of the viral DNA, leaving recessed CA OH's at the 3' ends. In the second step, the PIC enters cell nucleus. This process is mediated through integrase and Vpr proteins, and allows the virus to infect a non dividing cell. This ability to enter the nucleus is specific of lentiviruses, other retroviruses cannot and rely on cell division to access cell chromosomes. In the third step, termed strand transfer, the integrase protein joins the previously processed 3' ends to the 5' ends of strands of target cellular DNA at the site of integration. The 5'-ends are produced by integrase-catalyzed staggered cuts, 5 bp apart. A Y-shaped, gapped, recombination intermediate results, with the 5'-ends of the viral DNA strands and the 3' ends of target DNA strands remaining unjoined, flanking a gap of 5 bp. The last step is viral DNA integration into host chromosome. This involves host DNA repair synthesis in which the 5 bp gaps between the unjoined strands are filled in and then ligated. Since this process occurs at both cuts flanking the SIV genome, a 5 bp duplication of host DNA is produced at the ends of SIV integration. Alternatively, Integrase may catalyze the excision of viral DNA just after strand transfer, this is termed disintegration. This is Gag-Pol polyprotein (gag-pol) from Cercopithecidae (Old World monkeys).